The primary structure comprises 520 residues: Laccase-1 (520 aa).

The first 21 residues, methionine 1 to alanine 21, serve as a signal peptide directing secretion. Plastocyanin-like domains lie at isoleucine 23 to tyrosine 148 and valine 160 to tyrosine 302. N-linked (GlcNAc...) asparagine glycans are attached at residues asparagine 72 and asparagine 75. 4 residues coordinate Cu cation: histidine 85, histidine 87, histidine 130, and histidine 132. 2 cysteine pairs are disulfide-bonded: cysteine 106/cysteine 509 and cysteine 138/cysteine 226. 4 N-linked (GlcNAc...) asparagine glycosylation sites follow: asparagine 229, asparagine 238, asparagine 354, and asparagine 361. The Plastocyanin-like 3 domain occupies threonine 369 to aspartate 491. The Cu cation site is built by histidine 416, histidine 419, histidine 421, histidine 473, cysteine 474, histidine 475, and histidine 479.

Belongs to the multicopper oxidase family. In terms of assembly, homodimer. The cofactor is Cu cation.

Its subcellular location is the secreted. The catalysed reaction is 4 hydroquinone + O2 = 4 benzosemiquinone + 2 H2O. Lignin degradation and detoxification of lignin-derived products. In Trametes villosa (White-rot fungus), this protein is Laccase-1.